Consider the following 102-residue polypeptide: WFSFIREAYQGAEDMWRAYSDMKEANWRDSDKYFHARGNYDAAKRGPGGVWAAEVISDAREGIQSLMGRGHEDSMADQEANRWGRSGNDPNHYRPAGLPDKY.

Positions glycine 68–tyrosine 102 are disordered. A compositionally biased stretch (basic and acidic residues) spans arginine 69 to arginine 82.

This sequence belongs to the SAA family. In terms of tissue distribution, expressed by the liver; secreted in plasma.

It is found in the secreted. In terms of biological role, major acute phase reactant. Apolipoprotein of the HDL complex. The polypeptide is Serum amyloid A-5 protein (Mesocricetus auratus (Golden hamster)).